Reading from the N-terminus, the 246-residue chain is Probable transcriptional regulatory protein HSM_1763 (246 aa).

It belongs to the TACO1 family.

Its subcellular location is the cytoplasm. The protein is Probable transcriptional regulatory protein HSM_1763 of Histophilus somni (strain 2336) (Haemophilus somnus).